A 274-amino-acid polypeptide reads, in one-letter code: Undecaprenyl-diphosphatase (274 aa).

Transmembrane regions (helical) follow at residues 1-21 (MDWL…FLPI), 42-62 (VKDT…LVYY), 81-101 (LWLG…LFGD), 107-127 (LFRP…MWLL), 142-162 (ISAG…LWPG), 184-204 (TKFS…LDFI), 213-233 (IGVV…YFAI), and 248-268 (FAVY…RGVL).

Belongs to the UppP family.

The protein resides in the cell membrane. It carries out the reaction di-trans,octa-cis-undecaprenyl diphosphate + H2O = di-trans,octa-cis-undecaprenyl phosphate + phosphate + H(+). In terms of biological role, catalyzes the dephosphorylation of undecaprenyl diphosphate (UPP). Confers resistance to bacitracin. This is Undecaprenyl-diphosphatase from Deinococcus radiodurans (strain ATCC 13939 / DSM 20539 / JCM 16871 / CCUG 27074 / LMG 4051 / NBRC 15346 / NCIMB 9279 / VKM B-1422 / R1).